The following is a 364-amino-acid chain: Phospho-N-acetylmuramoyl-pentapeptide-transferase (364 aa).

10 helical membrane passes run 18-38 (SLLI…AQIL), 48-68 (LFPL…VVPV), 91-111 (GTPT…ALIW), 114-134 (LDPA…IGWI), 154-174 (LILQ…TQSA), 183-203 (GQII…VLVA), 214-234 (VDGL…ALMA), 237-257 (NPGL…FIVH), 280-300 (AIGI…IFFV), and 343-363 (TQIV…AVIS).

The protein belongs to the glycosyltransferase 4 family. MraY subfamily. Mg(2+) is required as a cofactor.

The protein resides in the cell inner membrane. It catalyses the reaction UDP-N-acetyl-alpha-D-muramoyl-L-alanyl-gamma-D-glutamyl-meso-2,6-diaminopimeloyl-D-alanyl-D-alanine + di-trans,octa-cis-undecaprenyl phosphate = di-trans,octa-cis-undecaprenyl diphospho-N-acetyl-alpha-D-muramoyl-L-alanyl-D-glutamyl-meso-2,6-diaminopimeloyl-D-alanyl-D-alanine + UMP. It participates in cell wall biogenesis; peptidoglycan biosynthesis. Its function is as follows. Catalyzes the initial step of the lipid cycle reactions in the biosynthesis of the cell wall peptidoglycan: transfers peptidoglycan precursor phospho-MurNAc-pentapeptide from UDP-MurNAc-pentapeptide onto the lipid carrier undecaprenyl phosphate, yielding undecaprenyl-pyrophosphoryl-MurNAc-pentapeptide, known as lipid I. This Rippkaea orientalis (strain PCC 8801 / RF-1) (Cyanothece sp. (strain PCC 8801)) protein is Phospho-N-acetylmuramoyl-pentapeptide-transferase.